The chain runs to 169 residues: NADH-quinone oxidoreductase subunit B (169 aa).

[4Fe-4S] cluster contacts are provided by Cys-42, Cys-43, Cys-107, and Cys-136.

The protein belongs to the complex I 20 kDa subunit family. As to quaternary structure, NDH-1 is composed of 14 different subunits. Subunits NuoB, C, D, E, F, and G constitute the peripheral sector of the complex. [4Fe-4S] cluster serves as cofactor.

It localises to the cell inner membrane. It carries out the reaction a quinone + NADH + 5 H(+)(in) = a quinol + NAD(+) + 4 H(+)(out). NDH-1 shuttles electrons from NADH, via FMN and iron-sulfur (Fe-S) centers, to quinones in the respiratory chain. The immediate electron acceptor for the enzyme in this species is believed to be ubiquinone. Couples the redox reaction to proton translocation (for every two electrons transferred, four hydrogen ions are translocated across the cytoplasmic membrane), and thus conserves the redox energy in a proton gradient. The protein is NADH-quinone oxidoreductase subunit B of Wolinella succinogenes (strain ATCC 29543 / DSM 1740 / CCUG 13145 / JCM 31913 / LMG 7466 / NCTC 11488 / FDC 602W) (Vibrio succinogenes).